The primary structure comprises 700 residues: Elongation factor G 1 (700 aa).

One can recognise a tr-type G domain in the interval 8 to 290; the sequence is ERYRNIGISA…AVIDYLPSPA (283 aa). GTP is bound by residues 17–24, 88–92, and 142–145; these read AHIDAGKT, DTPGH, and NKMD.

Belongs to the TRAFAC class translation factor GTPase superfamily. Classic translation factor GTPase family. EF-G/EF-2 subfamily.

It is found in the cytoplasm. In terms of biological role, catalyzes the GTP-dependent ribosomal translocation step during translation elongation. During this step, the ribosome changes from the pre-translocational (PRE) to the post-translocational (POST) state as the newly formed A-site-bound peptidyl-tRNA and P-site-bound deacylated tRNA move to the P and E sites, respectively. Catalyzes the coordinated movement of the two tRNA molecules, the mRNA and conformational changes in the ribosome. This chain is Elongation factor G 1, found in Bordetella parapertussis (strain 12822 / ATCC BAA-587 / NCTC 13253).